Reading from the N-terminus, the 348-residue chain is Sex-lethal homolog (348 aa).

RRM domains are found at residues 110–188 and 196–276; these read TNLI…YARP and TNLY…LAEE. The segment covering 296–310 has biased composition (gly residues); the sequence is GGGGGGGGGGGGGMG. Residues 296 to 317 are disordered; sequence GGGGGGGGGGGGGMGGPPPPPM.

It localises to the nucleus. Unknown; apparently not involved in somatic sex determination. This Ceratitis capitata (Mediterranean fruit fly) protein is Sex-lethal homolog (SXL).